We begin with the raw amino-acid sequence, 927 residues long: Lysine-specific demethylase JMJ28 (927 aa).

The WRC domain maps to 7–52 (VPDEFRCNRSDGKQWRCKRRALEGKKMCESHHSQQSLKRSKQKVAE). A Nuclear localization signal 1 motif is present at residues 30–37 (GKKMCESH). Residues 30–92 (GKKMCESHHS…RLGKSKRKRV (63 aa)) form a disordered region. The span at 80-91 (RSKRLGKSKRKR) shows a compositional bias: basic residues. Residues 127–134 (EKRKRLPN) carry the Nuclear localization signal 2 motif. Residues cysteine 227, cysteine 230, cysteine 241, cysteine 244, cysteine 250, cysteine 253, cysteine 269, and cysteine 272 each coordinate Zn(2+). Residues 227–273 (CHWCGTRGFGDLISCLSCEREFFCIDCIEKRNKGSKEEVEKKCPVCR) form an RING-type; degenerate zinc finger. Residues 330 to 339 (ENDAEKKEGN) show a composition bias toward basic and acidic residues. Disordered stretches follow at residues 330–359 (ENDAEKKEGNPAEPQIHSSELTSDDRQPCS) and 701–736 (RSKNPAKGRESRFDKGKKRDRLDDYSSSDSESSQHC). Positions 601–881 (FPNHYAEILN…ESIKRVKELN (281 aa)) constitute a JmjC domain.

This sequence belongs to the JARID1 histone demethylase family. In terms of assembly, interacts with the FBH transcription factors FBH1, FBH2, FBH3 and FBH4. The cofactor is Fe(2+). As to expression, expressed in inflorescences, flowers, roots, siliques, leaves and stems, especially in the vasculature (mainly phloem), with highest levels in floral organs. Present at high levels in flowers, shoot apex and young seeds, but observed at low levels in dry seeds, root apex and anthers.

The protein resides in the nucleus. May function as histone H3 lysine demethylase and be involved in regulation of gene expression. Regulates flowering time by promoting CONSTANS (CO) and CONSTANS-LIKE genes (e.g. COL2 and COL5) expression via interaction with FBH transcription factors (FBH1, FBH2, FBH3 and FBH4) at their loci to remove H3K9me2 repressive histone marks. Also modulates the expression of several developmental genes such as MYB30, TFS1, AGL6 and RVE2. The sequence is that of Lysine-specific demethylase JMJ28 from Arabidopsis thaliana (Mouse-ear cress).